A 282-amino-acid chain; its full sequence is MSDFSMETLKNLRQQTGVGLTKCKEALEHAKGNLEDAVVYLRKLGLASAGKKEHRETKEGVIAALVDERGAALVEVNVETDFVANNSVFRAFVTSLLSDLLDHKLSDVEALARVMSSQEPSLSVEELKAVTMQTVGENIRISRAFYTPVNSGQSVGIYSHGNGKAVAIVFLSGSENQEALAKDIAMHIVASQPQFLSKESVPQEILEREREVFSSQVAGKPQEVVEKITQGKFKAFFQEACLLEQAFIKDPEVTIQGLIDRAAKASGEPLRVEHFVFWKMGA.

Residues 80 to 83 are involved in Mg(2+) ion dislocation from EF-Tu; that stretch reads TDFV.

Belongs to the EF-Ts family.

Its subcellular location is the cytoplasm. Associates with the EF-Tu.GDP complex and induces the exchange of GDP to GTP. It remains bound to the aminoacyl-tRNA.EF-Tu.GTP complex up to the GTP hydrolysis stage on the ribosome. The sequence is that of Elongation factor Ts from Chlamydia trachomatis serovar L2b (strain UCH-1/proctitis).